Here is a 145-residue protein sequence, read N- to C-terminus: Synaptojanin-2-binding protein (145 aa).

Over 1-117 the chain is Cytoplasmic; that stretch reads MNGRVDYLVS…VHRGDGEPSG (117 aa). The PDZ domain maps to 13–100; it reads EINLTRGPSG…AVSLRVQHRL (88 aa). Residues 118-138 traverse the membrane as a helical segment; that stretch reads VPVAVVLLPVFALTLVAVWAF. Residues 139–145 lie on the Mitochondrial intermembrane side of the membrane; sequence VRYRKQL.

As to quaternary structure, binds (via the PDZ domain) to isoform 2A of SYNJ2 (via the unique motif in the C-terminus). Interacts (via C-terminus) with RALBP1. Interacts (via PDZ domain) with ACVR2A (via C-terminus) and ACVR2B (via C-terminus). Forms a ternary complex with ACVR2A and RALBP1. Interacts with MAPK12. Interacts with DLL1; enhances DLL1 protein stability, and promotes notch signaling in endothelial cells. Widely expressed.

It is found in the mitochondrion outer membrane. Functionally, regulates endocytosis of activin type 2 receptor kinases through the Ral/RALBP1-dependent pathway and may be involved in suppression of activin-induced signal transduction. This is Synaptojanin-2-binding protein (Synj2bp) from Rattus norvegicus (Rat).